Here is a 199-residue protein sequence, read N- to C-terminus: MARCKS-related protein (199 aa).

Residues 1-199 are disordered; sequence MGSQSSKAPR…GPASASAENE (199 aa). Gly-2 is lipidated: N-myristoyl glycine. Thr-14 is subject to Phosphothreonine. Residues 16–26 are compositionally biased toward low complexity; that stretch reads EEAAGASPAKA. Residues Ser-22, Ser-36, and Ser-48 each carry the phosphoserine modification. A compositionally biased stretch (low complexity) spans 53-64; that stretch reads GADEAAGATGDA. Ser-71 bears the Phosphoserine mark. Basic and acidic residues predominate over residues 74 to 85; that stretch reads AEAKGEVAPKET. At Thr-85 the chain carries Phosphothreonine. The segment covering 86–98 has biased composition (basic residues); it reads PKKKKKFSFKKPF. The interval 87-110 is effector domain involved in lipid-binding and calmodulin-binding; that stretch reads KKKKKFSFKKPFKLSGLSFKRNRK. Residues Ser-93, Ser-101, and Ser-104 each carry the phosphoserine; by PKC modification. Ser-119 bears the Phosphoserine mark. Ser-120 is modified (phosphoserine; by MAPK8). Residues Ser-132 and Ser-135 each carry the phosphoserine modification. Thr-148 carries the phosphothreonine; by MAPK8 modification. Ser-151, Ser-162, and Ser-165 each carry phosphoserine. Residues 175–199 show a composition bias toward low complexity; that stretch reads GPQAAEPSTPSGPESGPASASAENE. The residue at position 183 (Thr-183) is a Phosphothreonine; by MAPK8.

This sequence belongs to the MARCKS family. Binds to filamentous actin (F-actin), but not to monomeric G-actin, independently of its phosphorylation status. Interacts with calmodulin. In terms of processing, phosphorylated. Phosphorylation at Ser-120 and Thr-183 is non-redundantly catalyzed by MAPK8 in vivo. Phosphorylation at Thr-148 is preferentially catalyzed by MAPK8 in vivo, but this modification can also be catalyzed by other kinases in the absence of MAPK8. May be phosphorylated by protein kinase C, which disrupts the interaction with calmodulin.

Its subcellular location is the cytoplasm. The protein localises to the cytoskeleton. It is found in the cell membrane. Controls cell movement by regulating actin cytoskeleton homeostasis and filopodium and lamellipodium formation. When unphosphorylated, induces cell migration. When phosphorylated by MAPK8, induces actin bundles formation and stabilization, thereby reducing actin plasticity, hence restricting cell movement, including neuronal migration. May be involved in coupling the protein kinase C and calmodulin signal transduction systems. The sequence is that of MARCKS-related protein (Marcksl1) from Rattus norvegicus (Rat).